Consider the following 148-residue polypeptide: Myosin light chain 3, skeletal muscle isoform (148 aa).

Position 1 is an N-acetylthreonine (Thr1). EF-hand domains follow at residues 6–41 (DQIE…LGQN) and 82–117 (GTYD…LGEK).

In terms of assembly, myosin is a hexamer of 2 heavy chains and 4 light chains.

The sequence is that of Myosin light chain 3, skeletal muscle isoform from Chelon ramada (Thin-lipped grey mullet).